A 335-amino-acid chain; its full sequence is Ketol-acid reductoisomerase (NADP(+)) (335 aa).

Residues 1–182 form the KARI N-terminal Rossmann domain; it reads MATIIYDNET…GATRAGVYET (182 aa). Residues 25 to 28, R48, S51, S53, and 83 to 86 contribute to the NADP(+) site; these read YGSQ and DEKQ. The active site involves H108. Residue G134 coordinates NADP(+). One can recognise a KARI C-terminal knotted domain in the interval 183 to 328; it reads TFREETETDL…KEIRANIPWL (146 aa). 4 residues coordinate Mg(2+): D191, E195, E227, and E231. Residue S252 coordinates substrate.

Belongs to the ketol-acid reductoisomerase family. Mg(2+) is required as a cofactor.

It catalyses the reaction (2R)-2,3-dihydroxy-3-methylbutanoate + NADP(+) = (2S)-2-acetolactate + NADPH + H(+). The enzyme catalyses (2R,3R)-2,3-dihydroxy-3-methylpentanoate + NADP(+) = (S)-2-ethyl-2-hydroxy-3-oxobutanoate + NADPH + H(+). It functions in the pathway amino-acid biosynthesis; L-isoleucine biosynthesis; L-isoleucine from 2-oxobutanoate: step 2/4. The protein operates within amino-acid biosynthesis; L-valine biosynthesis; L-valine from pyruvate: step 2/4. Its function is as follows. Involved in the biosynthesis of branched-chain amino acids (BCAA). Catalyzes an alkyl-migration followed by a ketol-acid reduction of (S)-2-acetolactate (S2AL) to yield (R)-2,3-dihydroxy-isovalerate. In the isomerase reaction, S2AL is rearranged via a Mg-dependent methyl migration to produce 3-hydroxy-3-methyl-2-ketobutyrate (HMKB). In the reductase reaction, this 2-ketoacid undergoes a metal-dependent reduction by NADPH to yield (R)-2,3-dihydroxy-isovalerate. This Methanosarcina acetivorans (strain ATCC 35395 / DSM 2834 / JCM 12185 / C2A) protein is Ketol-acid reductoisomerase (NADP(+)).